The following is a 353-amino-acid chain: B1 bradykinin receptor (353 aa).

The Extracellular portion of the chain corresponds to 1-40 (MASSWPPLELQSSNQSQLFPQNATACDNAPEAWDLLHRVL). Residues asparagine 14 and asparagine 22 are each glycosylated (N-linked (GlcNAc...) asparagine). A helical membrane pass occupies residues 41-64 (PTFIISICFFGLLGNLFVLLVFLL). The Cytoplasmic segment spans residues 65–73 (PRRQLNVAE). The chain crosses the membrane as a helical span at residues 74-98 (IYLANLAASDLVFVLGLPFWAENIW). Residues 99 to 111 (NQFNWPFGALLCR) lie on the Extracellular side of the membrane. Cysteine 110 and cysteine 189 form a disulfide bridge. Residues 112–133 (VINGVIKANLFISIFLVVAISQ) form a helical membrane-spanning segment. At 134 to 155 (DRYRVLVHPMASRRQQRRRQAR) the chain is on the cytoplasmic side. The helical transmembrane segment at 156–178 (VTCVLIWVVGGLLSIPTFLLRSI) threads the bilayer. The Extracellular segment spans residues 179–199 (QAVPDLNITACILLLPHEAWH). N-linked (GlcNAc...) asparagine glycosylation occurs at asparagine 185. The helical transmembrane segment at 200 to 226 (FARIVELNILGFLLPLAAIVFFNYHIL) threads the bilayer. Topologically, residues 227–247 (ASLRTREEVSRTRCGGRKDSK) are cytoplasmic. Residues 248 to 272 (TTALILTLVVAFLVCWAPYHFFAFL) traverse the membrane as a helical segment. Residues 273-291 (EFLFQVQAVRGCFWEDFID) lie on the Extracellular side of the membrane. The helical transmembrane segment at 292 to 314 (LGLQLANFFAFTNSSLNPVIYVF) threads the bilayer. Residues 315–353 (VGRLFRTKVWELYKQCTPKSLAPISSSHRKEIFQLFWRN) lie on the Cytoplasmic side of the membrane. A lipid anchor (S-palmitoyl cysteine) is attached at cysteine 330.

This sequence belongs to the G-protein coupled receptor 1 family. Bradykinin receptor subfamily. BDKRB1 sub-subfamily.

The protein resides in the cell membrane. Its function is as follows. This is a receptor for bradykinin. Could be a factor in chronic pain and inflammation. This is B1 bradykinin receptor (BDKRB1) from Homo sapiens (Human).